Here is a 458-residue protein sequence, read N- to C-terminus: Exodeoxyribonuclease 7 large subunit (458 aa).

The protein belongs to the XseA family. Heterooligomer composed of large and small subunits.

The protein resides in the cytoplasm. The catalysed reaction is Exonucleolytic cleavage in either 5'- to 3'- or 3'- to 5'-direction to yield nucleoside 5'-phosphates.. Bidirectionally degrades single-stranded DNA into large acid-insoluble oligonucleotides, which are then degraded further into small acid-soluble oligonucleotides. The protein is Exodeoxyribonuclease 7 large subunit of Yersinia pseudotuberculosis serotype O:1b (strain IP 31758).